The following is a 344-amino-acid chain: L-rhamnose-proton symporter (344 aa).

Transmembrane regions (helical) follow at residues 4 to 24 (AITM…CFYA), 38 to 58 (WSVG…AILL), 72 to 92 (TLLP…NYGL), 101 to 121 (MGIG…TPIL), 137 to 157 (TLLG…AGQL), 175 to 195 (LVLA…MNAA), 214 to 234 (LPSY…FCFI), 259 to 279 (VLLS…YAWG), 290 to 310 (MSWM…GLVL), and 321 to 341 (VGVL…VGLG).

This sequence belongs to the L-rhamnose transporter (TC 2.A.7.6) family.

It is found in the cell inner membrane. The catalysed reaction is L-rhamnopyranose(in) + H(+)(in) = L-rhamnopyranose(out) + H(+)(out). In terms of biological role, uptake of L-rhamnose across the cytoplasmic membrane with the concomitant transport of protons into the cell (symport system). This chain is L-rhamnose-proton symporter, found in Enterobacter sp. (strain 638).